A 476-amino-acid chain; its full sequence is Eukaryotic translation initiation factor 3 subunit L (476 aa).

In terms of domain architecture, PCI spans 257–452 (DAIRMFSHIL…DLDYALENDL (196 aa)).

The protein belongs to the eIF-3 subunit L family. In terms of assembly, component of the eukaryotic translation initiation factor 3 (eIF-3) complex.

The protein resides in the cytoplasm. Its function is as follows. Component of the eukaryotic translation initiation factor 3 (eIF-3) complex, which is involved in protein synthesis of a specialized repertoire of mRNAs and, together with other initiation factors, stimulates binding of mRNA and methionyl-tRNAi to the 40S ribosome. The eIF-3 complex specifically targets and initiates translation of a subset of mRNAs involved in cell proliferation. The chain is Eukaryotic translation initiation factor 3 subunit L from Aspergillus clavatus (strain ATCC 1007 / CBS 513.65 / DSM 816 / NCTC 3887 / NRRL 1 / QM 1276 / 107).